We begin with the raw amino-acid sequence, 593 residues long: Probable 5'-nucleotidase (593 aa).

Residues 1-21 (MKRFIPHRVIHAVCIGLALVG) form the signal peptide. Cys22 carries the N-palmitoyl cysteine lipid modification. A lipid anchor (S-diacylglycerol cysteine) is attached at Cys22. Residues Asp41, His43, Asp91, Asn123, and His224 each contribute to the a divalent metal cation site. Residues Phe456 and 539-545 (YIARGKD) each bind substrate.

This sequence belongs to the 5'-nucleotidase family. The cofactor is a divalent metal cation.

Its subcellular location is the cell membrane. It catalyses the reaction a ribonucleoside 5'-phosphate + H2O = a ribonucleoside + phosphate. This Treponema pallidum (strain Nichols) protein is Probable 5'-nucleotidase.